The following is a 103-amino-acid chain: Alpha-ketoglutarate dehydrogenase component 4 (103 aa).

The residue at position 1 (M1) is an N-acetylmethionine. K5 is subject to N6-succinyllysine. The segment at 20–69 is disordered; sequence TPLIRFPDRRDNPKPNVSEALRSAGLPSHSSVISQHSKGSKSPDLLMYQG. A compositionally biased stretch (polar residues) spans 47–56; sequence SHSSVISQHS. S49, S61, and S90 each carry phosphoserine.

This sequence belongs to the alpha-ketoglutarate dehydrogenase component 4 family. Component of the 2-oxoglutarate dehydrogenase complex (OGDHC), composed of OGDH (2-oxoglutarate dehydrogenase; also called E1 subunit), DLST (dihydrolipoamide succinyltransferase; also called E2 subunit) and DLD (dihydrolipoamide dehydrogenase; also called E3 subunit), and the assembly factor KGD4. Within OGDHC complex, interacts (via N-terminus) with E3 subunit and (via C-terminus) with E2 subunit.

The protein resides in the mitochondrion. Functionally, molecular adapter that is necessary to form a stable 2-oxoglutarate dehydrogenase enzyme complex (OGDHC). Enables the specific recruitment of E3 subunit to E2 subunit in the 2-oxoglutarate dehydrogenase complex (OGDHC). The sequence is that of Alpha-ketoglutarate dehydrogenase component 4 from Homo sapiens (Human).